The sequence spans 154 residues: Large ribosomal subunit protein uL13 (154 aa).

The protein belongs to the universal ribosomal protein uL13 family. As to quaternary structure, part of the 50S ribosomal subunit.

In terms of biological role, this protein is one of the early assembly proteins of the 50S ribosomal subunit, although it is not seen to bind rRNA by itself. It is important during the early stages of 50S assembly. This is Large ribosomal subunit protein uL13 from Bartonella quintana (strain Toulouse) (Rochalimaea quintana).